The primary structure comprises 286 residues: Sulfur carrier protein FdhD (286 aa).

The Cysteine persulfide intermediate role is filled by Cys-110. Mo-bis(molybdopterin guanine dinucleotide) is bound at residue 247-252 (FARGEK).

Belongs to the FdhD family.

Its subcellular location is the cytoplasm. Required for formate dehydrogenase (FDH) activity. Acts as a sulfur carrier protein that transfers sulfur from IscS to the molybdenum cofactor prior to its insertion into FDH. The chain is Sulfur carrier protein FdhD from Wolinella succinogenes (strain ATCC 29543 / DSM 1740 / CCUG 13145 / JCM 31913 / LMG 7466 / NCTC 11488 / FDC 602W) (Vibrio succinogenes).